The chain runs to 361 residues: Outer mitochondrial transmembrane helix translocase (361 aa).

Topologically, residues 1–15 (MVHAEAFSRPLSRNE) are mitochondrial intermembrane. The chain crosses the membrane as a helical span at residues 16–32 (VVGLIFRLTIFGAVTYF). Topologically, residues 33 to 361 (TIKWMVDAID…QNVLTHVCLD (329 aa)) are cytoplasmic. Residue 133–140 (GPPGCGKT) participates in ATP binding. Serine 322 is modified (phosphoserine).

Belongs to the AAA ATPase family. MSP1 subfamily. Interacts with GRIA2 and GRIP1 in an ATP-dependent manner. ATAD1-catalyzed ATP hydrolysis disrupts not only its binding to GRIA2 and GRIP1, but also interaction between GRIP1 and GRIA2, leading to AMPAR complex disassembly.

It localises to the mitochondrion outer membrane. The protein resides in the peroxisome membrane. It is found in the postsynaptic cell membrane. It catalyses the reaction [protein]-with a C-terminal TM segment(out) + ATP + H2O = [protein]-with a C-terminal TM segment(in) + ADP + phosphate + H(+). Functionally, outer mitochondrial translocase required to remove mislocalized tail-anchored transmembrane proteins on mitochondria. Specifically recognizes and binds tail-anchored transmembrane proteins: acts as a dislocase that mediates the ATP-dependent extraction of mistargeted tail-anchored transmembrane proteins from the mitochondrion outer membrane. Also plays a critical role in regulating the surface expression of AMPA receptors (AMPAR), thereby regulating synaptic plasticity and learning and memory. Required for NMDA-stimulated AMPAR internalization and inhibition of GRIA1 and GRIA2 recycling back to the plasma membrane; these activities are ATPase-dependent. The polypeptide is Outer mitochondrial transmembrane helix translocase (Homo sapiens (Human)).